We begin with the raw amino-acid sequence, 169 residues long: Large ribosomal subunit protein uL10 (169 aa).

Belongs to the universal ribosomal protein uL10 family. As to quaternary structure, part of the ribosomal stalk of the 50S ribosomal subunit. The N-terminus interacts with L11 and the large rRNA to form the base of the stalk. The C-terminus forms an elongated spine to which L12 dimers bind in a sequential fashion forming a multimeric L10(L12)X complex.

Functionally, forms part of the ribosomal stalk, playing a central role in the interaction of the ribosome with GTP-bound translation factors. This chain is Large ribosomal subunit protein uL10, found in Deinococcus geothermalis (strain DSM 11300 / CIP 105573 / AG-3a).